Here is a 284-residue protein sequence, read N- to C-terminus: Bifunctional protein FolD (284 aa).

Residues 166–168 and Ser191 contribute to the NADP(+) site; that span reads GRS.

Belongs to the tetrahydrofolate dehydrogenase/cyclohydrolase family. As to quaternary structure, homodimer.

The catalysed reaction is (6R)-5,10-methylene-5,6,7,8-tetrahydrofolate + NADP(+) = (6R)-5,10-methenyltetrahydrofolate + NADPH. It catalyses the reaction (6R)-5,10-methenyltetrahydrofolate + H2O = (6R)-10-formyltetrahydrofolate + H(+). It participates in one-carbon metabolism; tetrahydrofolate interconversion. Functionally, catalyzes the oxidation of 5,10-methylenetetrahydrofolate to 5,10-methenyltetrahydrofolate and then the hydrolysis of 5,10-methenyltetrahydrofolate to 10-formyltetrahydrofolate. This Delftia acidovorans (strain DSM 14801 / SPH-1) protein is Bifunctional protein FolD.